The sequence spans 337 residues: Anthranilate phosphoribosyltransferase (337 aa).

5-phospho-alpha-D-ribose 1-diphosphate contacts are provided by residues Gly-81, 84 to 85 (GD), Ser-89, 91 to 94 (NVST), 109 to 117 (KHGNRAATS), and Ala-121. Residue Gly-81 participates in anthranilate binding. Ser-93 is a Mg(2+) binding site. Position 112 (Asn-112) interacts with anthranilate. Anthranilate is bound at residue Arg-167. Mg(2+)-binding residues include Asp-226 and Glu-227.

Belongs to the anthranilate phosphoribosyltransferase family. As to quaternary structure, homodimer. It depends on Mg(2+) as a cofactor.

It carries out the reaction N-(5-phospho-beta-D-ribosyl)anthranilate + diphosphate = 5-phospho-alpha-D-ribose 1-diphosphate + anthranilate. It participates in amino-acid biosynthesis; L-tryptophan biosynthesis; L-tryptophan from chorismate: step 2/5. In terms of biological role, catalyzes the transfer of the phosphoribosyl group of 5-phosphorylribose-1-pyrophosphate (PRPP) to anthranilate to yield N-(5'-phosphoribosyl)-anthranilate (PRA). This Methylorubrum extorquens (strain PA1) (Methylobacterium extorquens) protein is Anthranilate phosphoribosyltransferase.